The primary structure comprises 267 residues: Interleukin-1 alpha (267 aa).

A propeptide spanning residues 1-112 is cleaved from the precursor; that stretch reads MAKVPDLFED…DPEEGIIKPR (112 aa). N-linked (GlcNAc...) asparagine glycosylation is present at Asn64. The residue at position 82 (Lys82) is an N6-acetyllysine. The nuclear localization signal (NLS) stretch occupies residues 82–86; sequence KKRRL. Ser87 bears the Phosphoserine mark. 2 N-linked (GlcNAc...) asparagine glycosylation sites follow: Asn100 and Asn141.

The protein belongs to the IL-1 family. As to quaternary structure, monomer. Interacts with TMED10; the interaction mediates the translocation from the cytoplasm into the ERGIC (endoplasmic reticulum-Golgi intermediate compartment) and thereby secretion. Interacts with IL1R1. Interacts with S100A13; this interaction is the first step in the export of IL1A, followed by direct translocation of this complex across the plasma membrane. In terms of processing, acetylated within its nuclear localization sequence, which impacts subcellular localization. Proteolytic processed by CAPN1 in a calcium-dependent manner. Cleavage from 31 kDa precursor to 18 kDa biologically active molecules. Post-translationally, phosphorylated. Phosphorylation greatly enhances susceptibility to digestion and promotes the conversion of pre-IL1A alpha to the biologically active IL1A.

The protein resides in the nucleus. Its subcellular location is the cytoplasm. It is found in the secreted. Its function is as follows. Cytokine constitutively present intracellularly in nearly all resting non-hematopoietic cells that plays an important role in inflammation and bridges the innate and adaptive immune systems. After binding to its receptor IL1R1 together with its accessory protein IL1RAP, forms the high affinity interleukin-1 receptor complex. Signaling involves the recruitment of adapter molecules such as MYD88, IRAK1 or IRAK4. In turn, mediates the activation of NF-kappa-B and the three MAPK pathways p38, p42/p44 and JNK pathways. Within the cell, acts as an alarmin and cell death results in its liberation in the extracellular space after disruption of the cell membrane to induce inflammation and alert the host to injury or damage. In addition to its role as a danger signal, which occurs when the cytokine is passively released by cell necrosis, directly senses DNA damage and acts as signal for genotoxic stress without loss of cell integrity. This is Interleukin-1 alpha (IL1A) from Oryctolagus cuniculus (Rabbit).